We begin with the raw amino-acid sequence, 99 residues long: DNA/RNA-binding protein Alba 1 (99 aa).

Lysine 17 carries the N6-acetyllysine modification.

Belongs to the histone-like Alba family. Post-translationally, acetylated. Acetylation at Lys-17 decreases DNA-binding affinity.

It is found in the cytoplasm. It localises to the chromosome. Functionally, binds double-stranded DNA tightly but without sequence specificity. Involved in DNA compaction. The chain is DNA/RNA-binding protein Alba 1 from Sulfurisphaera tokodaii (strain DSM 16993 / JCM 10545 / NBRC 100140 / 7) (Sulfolobus tokodaii).